The primary structure comprises 956 residues: RNA-silencing factor ers1 (956 aa).

Its subcellular location is the cytoplasm. The protein localises to the cytoskeleton. It localises to the microtubule organizing center. It is found in the spindle pole body. Its function is as follows. Involved in RNAi-dependent heterochromatin formation and centromeric silencing. Required for the conversion of centromeric pre-small interfering RNA transcripts into small interfering RNAs, histone H3 'Lys9' methylation, and the recruitment of the RITS complex to centromeric sequences. This chain is RNA-silencing factor ers1 (ers1), found in Schizosaccharomyces pombe (strain 972 / ATCC 24843) (Fission yeast).